Here is a 116-residue protein sequence, read N- to C-terminus: Bacterial microcompartment shell protein CutR (116 aa).

One can recognise a BMC circularly permuted domain in the interval 10 to 108 (RIIQESVPGK…LEYFKNSLGF (99 aa)).

It belongs to the EutS/PduU family. In terms of assembly, has been crystallized in 5 structures (all are mutated, 3 have an N-terminal His-tag), most are homohexameric with a central pore. In two the homohexamer lies flat with a beta-barrel on the flat face created by the protruding N termini of the six chains. In 2 others the hexamer is not flat but has a six-fold screw axis; the screw pitch is 33.8 or 41.9 Angstroms depending on the structure. Interacts with the BMC major shell protein.

It localises to the bacterial microcompartment. The protein operates within amine and polyamine metabolism; choline degradation. Functionally, a minor shell protein of the choline degradation-specific bacterial microcompartment (BMC). Proteins such as this one with circularly permuted BMC domains may play a key role in conferring heterogeneity and flexibility in this BMC. The polypeptide is Bacterial microcompartment shell protein CutR (Streptococcus intermedius (strain ATCC 27335 / DSM 20573 / CCUG 32759 / CIP 103248 / JCM 12996 / LMG 17840 / NCTC 11324 / SK54 / 1877)).